A 336-amino-acid polypeptide reads, in one-letter code: Ketol-acid reductoisomerase (NADP(+)) (336 aa).

The KARI N-terminal Rossmann domain occupies 3-183 (AKMYYDRDVD…GCTKAGVLET (181 aa)). Residues 26-29 (YGSQ), R49, S52, S54, and 84-87 (DEQQ) contribute to the NADP(+) site. The active site involves H109. G135 serves as a coordination point for NADP(+). The KARI C-terminal knotted domain maps to 184–329 (TFKEETETDL…KELRDQMPFI (146 aa)). Mg(2+)-binding residues include D192, E196, E228, and E232. A substrate-binding site is contributed by S253.

This sequence belongs to the ketol-acid reductoisomerase family. Requires Mg(2+) as cofactor.

It carries out the reaction (2R)-2,3-dihydroxy-3-methylbutanoate + NADP(+) = (2S)-2-acetolactate + NADPH + H(+). It catalyses the reaction (2R,3R)-2,3-dihydroxy-3-methylpentanoate + NADP(+) = (S)-2-ethyl-2-hydroxy-3-oxobutanoate + NADPH + H(+). It participates in amino-acid biosynthesis; L-isoleucine biosynthesis; L-isoleucine from 2-oxobutanoate: step 2/4. Its pathway is amino-acid biosynthesis; L-valine biosynthesis; L-valine from pyruvate: step 2/4. In terms of biological role, involved in the biosynthesis of branched-chain amino acids (BCAA). Catalyzes an alkyl-migration followed by a ketol-acid reduction of (S)-2-acetolactate (S2AL) to yield (R)-2,3-dihydroxy-isovalerate. In the isomerase reaction, S2AL is rearranged via a Mg-dependent methyl migration to produce 3-hydroxy-3-methyl-2-ketobutyrate (HMKB). In the reductase reaction, this 2-ketoacid undergoes a metal-dependent reduction by NADPH to yield (R)-2,3-dihydroxy-isovalerate. In Deinococcus radiodurans (strain ATCC 13939 / DSM 20539 / JCM 16871 / CCUG 27074 / LMG 4051 / NBRC 15346 / NCIMB 9279 / VKM B-1422 / R1), this protein is Ketol-acid reductoisomerase (NADP(+)).